The chain runs to 80 residues: Conotoxin SIVB (80 aa).

Positions 1–21 are cleaved as a signal peptide; sequence MGMRMMFTVFLSVVLATTVVS. A propeptide spanning residues 22 to 38 is cleaved from the precursor; that stretch reads TPSDRASDGRNAAVHER. Glutamine 39 bears the Pyrrolidone carboxylic acid mark. A glycan (O-linked (HexNAc...) serine) is linked at serine 45. Residues proline 55, proline 60, proline 61, proline 69, proline 72, and proline 75 each carry the 4-hydroxyproline modification. The residue at position 75 (proline 75) is a Proline amide. Residues 76 to 80 constitute a propeptide that is removed on maturation; that stretch reads GRRND.

Belongs to the conotoxin A superfamily. Post-translationally, contains 3 disulfide bonds. In terms of processing, O-linked glycan consists of Hex3-HexNAc2 pentasaccharide. In terms of tissue distribution, expressed by the venom duct.

It localises to the secreted. In terms of biological role, neurotoxin with probable activity on sodium channel. Induces intense repetitive firing of the frog neuromuscular junction, leading to a tetanic contracture in muscle fiber (spastic paralysis). In vivo, shows the same effect as the whole venom when injected on fish prey. The chain is Conotoxin SIVB from Conus striatus (Striated cone).